The following is a 282-amino-acid chain: Acetyl-coenzyme A carboxylase carboxyl transferase subunit beta (282 aa).

In terms of domain architecture, CoA carboxyltransferase N-terminal spans 28–282 (IMTKCPSCRT…TKILDIHHVS (255 aa)). Zn(2+)-binding residues include C32, C35, C51, and C54. The C4-type zinc-finger motif lies at 32 to 54 (CPSCRTIMYTKELKKNLYVCDSC).

It belongs to the AccD/PCCB family. In terms of assembly, acetyl-CoA carboxylase is a heterohexamer composed of biotin carboxyl carrier protein (AccB), biotin carboxylase (AccC) and two subunits each of ACCase subunit alpha (AccA) and ACCase subunit beta (AccD). It depends on Zn(2+) as a cofactor.

Its subcellular location is the cytoplasm. The enzyme catalyses N(6)-carboxybiotinyl-L-lysyl-[protein] + acetyl-CoA = N(6)-biotinyl-L-lysyl-[protein] + malonyl-CoA. Its pathway is lipid metabolism; malonyl-CoA biosynthesis; malonyl-CoA from acetyl-CoA: step 1/1. Component of the acetyl coenzyme A carboxylase (ACC) complex. Biotin carboxylase (BC) catalyzes the carboxylation of biotin on its carrier protein (BCCP) and then the CO(2) group is transferred by the transcarboxylase to acetyl-CoA to form malonyl-CoA. The protein is Acetyl-coenzyme A carboxylase carboxyl transferase subunit beta of Halalkalibacterium halodurans (strain ATCC BAA-125 / DSM 18197 / FERM 7344 / JCM 9153 / C-125) (Bacillus halodurans).